A 666-amino-acid polypeptide reads, in one-letter code: Long-chain-fatty-acid--CoA ligase ACSBG2 (666 aa).

Residues 230-238 (TSGTTGIPK), 418-423 (ELYGLS), D496, and R624 each bind ATP.

It belongs to the ATP-dependent AMP-binding enzyme family. Bubblegum subfamily. In terms of tissue distribution, testis-specific.

The protein localises to the cytoplasm. Its subcellular location is the membrane. The catalysed reaction is a long-chain fatty acid + ATP + CoA = a long-chain fatty acyl-CoA + AMP + diphosphate. The enzyme catalyses (5Z,8Z,11Z,14Z)-eicosatetraenoate + ATP + CoA = (5Z,8Z,11Z,14Z)-eicosatetraenoyl-CoA + AMP + diphosphate. It carries out the reaction hexadecanoate + ATP + CoA = hexadecanoyl-CoA + AMP + diphosphate. It catalyses the reaction (9Z)-octadecenoate + ATP + CoA = (9Z)-octadecenoyl-CoA + AMP + diphosphate. The catalysed reaction is (9Z,12Z)-octadecadienoate + ATP + CoA = (9Z,12Z)-octadecadienoyl-CoA + AMP + diphosphate. The enzyme catalyses tetracosanoate + ATP + CoA = tetracosanoyl-CoA + AMP + diphosphate. Its function is as follows. Catalyzes the conversion of fatty acids such as long chain and very long-chain fatty acids to their active form acyl-CoAs for both synthesis of cellular lipids, and degradation via beta-oxidation. Can activate diverse saturated, monosaturated and polyunsaturated fatty acids. Has increased ability to activate oleic and linoleic acid. May play a role in spermatogenesis. The protein is Long-chain-fatty-acid--CoA ligase ACSBG2 of Homo sapiens (Human).